The chain runs to 361 residues: DNA replication and repair protein RecF (361 aa).

Residue 30 to 37 (GDNAQGKT) coordinates ATP.

It belongs to the RecF family.

It localises to the cytoplasm. In terms of biological role, the RecF protein is involved in DNA metabolism; it is required for DNA replication and normal SOS inducibility. RecF binds preferentially to single-stranded, linear DNA. It also seems to bind ATP. The chain is DNA replication and repair protein RecF from Clostridium botulinum (strain Eklund 17B / Type B).